Here is a 458-residue protein sequence, read N- to C-terminus: Argininosuccinate lyase (458 aa).

It belongs to the lyase 1 family. Argininosuccinate lyase subfamily.

The protein localises to the cytoplasm. The enzyme catalyses 2-(N(omega)-L-arginino)succinate = fumarate + L-arginine. It participates in amino-acid biosynthesis; L-arginine biosynthesis; L-arginine from L-ornithine and carbamoyl phosphate: step 3/3. The protein is Argininosuccinate lyase of Haemophilus ducreyi (strain 35000HP / ATCC 700724).